Reading from the N-terminus, the 150-residue chain is Cytochrome c oxidase subunit 5A, mitochondrial (150 aa).

The N-terminal 41 residues, 1-41 (MLGTALRRCAVAAASRAGPRGLQHPAPVPGPTAAIQSIRCY), are a transit peptide targeting the mitochondrion. The short motif at 2–17 (LGTALRRCAVAAASRA) is the SIFI-degron element. K87 and K113 each carry N6-acetyllysine. T141 is modified (phosphothreonine).

Belongs to the cytochrome c oxidase subunit 5A family. In terms of assembly, component of the cytochrome c oxidase (complex IV, CIV), a multisubunit enzyme composed of 14 subunits. The complex is composed of a catalytic core of 3 subunits MT-CO1, MT-CO2 and MT-CO3, encoded in the mitochondrial DNA, and 11 supernumerary subunits COX4I, COX5A, COX5B, COX6A, COX6B, COX6C, COX7A, COX7B, COX7C, COX8 and NDUFA4, which are encoded in the nuclear genome. The complex exists as a monomer or a dimer and forms supercomplexes (SCs) in the inner mitochondrial membrane with NADH-ubiquinone oxidoreductase (complex I, CI) and ubiquinol-cytochrome c oxidoreductase (cytochrome b-c1 complex, complex III, CIII), resulting in different assemblies (supercomplex SCI(1)III(2)IV(1) and megacomplex MCI(2)III(2)IV(2)). Interacts with AFG1L. Interacts with RAB5IF. In terms of processing, in response to mitochondrial stress, the precursor protein is ubiquitinated by the SIFI complex in the cytoplasm before mitochondrial import, leading to its degradation. Within the SIFI complex, UBR4 initiates ubiquitin chain that are further elongated or branched by KCMF1.

It localises to the mitochondrion inner membrane. It participates in energy metabolism; oxidative phosphorylation. In terms of biological role, component of the cytochrome c oxidase, the last enzyme in the mitochondrial electron transport chain which drives oxidative phosphorylation. The respiratory chain contains 3 multisubunit complexes succinate dehydrogenase (complex II, CII), ubiquinol-cytochrome c oxidoreductase (cytochrome b-c1 complex, complex III, CIII) and cytochrome c oxidase (complex IV, CIV), that cooperate to transfer electrons derived from NADH and succinate to molecular oxygen, creating an electrochemical gradient over the inner membrane that drives transmembrane transport and the ATP synthase. Cytochrome c oxidase is the component of the respiratory chain that catalyzes the reduction of oxygen to water. Electrons originating from reduced cytochrome c in the intermembrane space (IMS) are transferred via the dinuclear copper A center (CU(A)) of subunit 2 and heme A of subunit 1 to the active site in subunit 1, a binuclear center (BNC) formed by heme A3 and copper B (CU(B)). The BNC reduces molecular oxygen to 2 water molecules using 4 electrons from cytochrome c in the IMS and 4 protons from the mitochondrial matrix. This Nycticebus coucang (Slow loris) protein is Cytochrome c oxidase subunit 5A, mitochondrial (COX5A).